A 107-amino-acid chain; its full sequence is MKSLLVCLVLAVVVLVASGHHVELCKKNDAELKEALTCITSKLPAALGCNDKSCVFEKLCKEGDLDEALKKHFTEAEVQTLHTTATDCDHSHGHEHSHGHEHGHGHH.

The first 19 residues, 1–19 (MKSLLVCLVLAVVVLVASG), serve as a signal peptide directing secretion. 3 disulfide bridges follow: C25–C60, C38–C88, and C49–C54. Residues 86–107 (TDCDHSHGHEHSHGHEHGHGHH) are disordered. Residues 87–107 (DCDHSHGHEHSHGHEHGHGHH) are compositionally biased toward basic and acidic residues.

The protein localises to the secreted. Its function is as follows. Has bacteriostatic activity against Gram-positive bacteria, but not against Gram-negative bacteria. Has fungistatic activity against some but not all fungi. Binds and sequesters copper and iron ions. Copper-chelating is crucial for antimicrobial activity against M.luteus. This chain is Antimicrobial peptide microplusin, found in Ixodes scapularis (Black-legged tick).